Reading from the N-terminus, the 942-residue chain is Leucine--tRNA ligase 2 (942 aa).

Positions 35–45 match the 'HIGH' region motif; the sequence is PYPNSPFHLGH. Residues 619–623 carry the 'KMSKS' region motif; the sequence is KMSKS. ATP is bound at residue Lys622.

It belongs to the class-I aminoacyl-tRNA synthetase family.

The protein resides in the cytoplasm. It carries out the reaction tRNA(Leu) + L-leucine + ATP = L-leucyl-tRNA(Leu) + AMP + diphosphate. The chain is Leucine--tRNA ligase 2 from Sulfolobus acidocaldarius (strain ATCC 33909 / DSM 639 / JCM 8929 / NBRC 15157 / NCIMB 11770).